The primary structure comprises 333 residues: uncharacterized protein (333 aa).

A signal peptide spans 1-23 (MSRSFMIILTIMLIALSLGEVLA). The helical transmembrane segment at 232 to 252 (SFFLGVLVTLMILSPVIVYLW) threads the bilayer.

Its subcellular location is the membrane. This is an uncharacterized protein from Pyrococcus abyssi (strain GE5 / Orsay).